Consider the following 665-residue polypeptide: BTB/POZ domain-containing protein At1g30440 (665 aa).

The BTB domain occupies 28–98; it reads SDIVVEVGEM…CYGVKLELTA (71 aa). The 295-residue stretch at 214–508 folds into the NPH3 domain; sequence DWWYEDASML…VQVLFFEQLQ (295 aa). A disordered region spans residues 260-280; that stretch reads LKRRRGGPESSGRFSTPLGSG. The span at 271–280 shows a compositional bias: polar residues; sequence GRFSTPLGSG. A Phosphoserine modification is found at serine 279. A coiled-coil region spans residues 281-306; it reads NVLSEEEQKNLLEEIQELLRMQKGLV. Tyrosine 449 is modified (phosphotyrosine). The span at 626–639 shows a compositional bias: polar residues; it reads SAQEGSVSKSNNEN. A disordered region spans residues 626–665; the sequence is SAQEGSVSKSNNENVKIEKLKDVKERRGKHKKASSISSER. Positions 640–650 are enriched in basic and acidic residues; that stretch reads VKIEKLKDVKE.

The protein belongs to the NPH3 family.

The protein operates within protein modification; protein ubiquitination. Its function is as follows. May act as a substrate-specific adapter of an E3 ubiquitin-protein ligase complex (CUL3-RBX1-BTB) which mediates the ubiquitination and subsequent proteasomal degradation of target proteins. This chain is BTB/POZ domain-containing protein At1g30440, found in Arabidopsis thaliana (Mouse-ear cress).